A 596-amino-acid polypeptide reads, in one-letter code: UvrABC system protein C (596 aa).

Residues 16 to 95 (SSPGVYRFYS…IKENKPKYNV (80 aa)) enclose the GIY-YIG domain. The UVR domain maps to 209–244 (SSVKKYYQEKMLSAAEDMQFEKAQFFKERYNSVLGL).

It belongs to the UvrC family. Interacts with UvrB in an incision complex.

The protein localises to the cytoplasm. Functionally, the UvrABC repair system catalyzes the recognition and processing of DNA lesions. UvrC both incises the 5' and 3' sides of the lesion. The N-terminal half is responsible for the 3' incision and the C-terminal half is responsible for the 5' incision. This chain is UvrABC system protein C, found in Cytophaga hutchinsonii (strain ATCC 33406 / DSM 1761 / CIP 103989 / NBRC 15051 / NCIMB 9469 / D465).